Here is a 290-residue protein sequence, read N- to C-terminus: Ig delta chain C region membrane-bound form (290 aa).

Residues 5-105 (PDMFLLSECK…WDSQSSKRVT (101 aa)) enclose the Ig-like 1 domain. The cysteines at positions 26 and 78 are disulfide-linked. Asn58 and Asn75 each carry an N-linked (GlcNAc...) asparagine glycan. Positions 89–111 (PFKFPESWDSQSSKRVTPTLQAK) are disordered. Residues 96-111 (WDSQSSKRVTPTLQAK) are compositionally biased toward polar residues. N-linked (GlcNAc...) asparagine glycosylation is found at Asn112, Asn135, and Asn227. The Ig-like 2 domain occupies 133-233 (PSNLTVNILT…TKLNASKSLA (101 aa)). Residues 262–279 (GLWPTMCTFVALFLLTLL) form a helical membrane-spanning segment. The Cytoplasmic segment spans residues 280 to 290 (YSGFVTFIKVK).

In terms of tissue distribution, cell lines producing IgD contain several mRNA species for Ig delta chains. In plasmacytomas, the secreted form is the major component, and the membrane-bound form is a minor component. In spleen, however, the membrane-bound form is the major component. These two forms differ in their C-terminal segments.

Its subcellular location is the cell membrane. This is Ig delta chain C region membrane-bound form from Mus musculus (Mouse).